Here is a 217-residue protein sequence, read N- to C-terminus: Small ribosomal subunit protein uS3 (217 aa).

One can recognise a KH type-2 domain in the interval 38–106; the sequence is IRKFINKELA…QVHINIIEIK (69 aa).

This sequence belongs to the universal ribosomal protein uS3 family. As to quaternary structure, part of the 30S ribosomal subunit. Forms a tight complex with proteins S10 and S14.

Its function is as follows. Binds the lower part of the 30S subunit head. Binds mRNA in the 70S ribosome, positioning it for translation. The polypeptide is Small ribosomal subunit protein uS3 (Streptococcus equi subsp. equi (strain 4047)).